Consider the following 119-residue polypeptide: Bombesin (119 aa).

The first 29 residues, Met-1–Cys-29, serve as a signal peptide directing secretion. A propeptide spanning residues Met-30 to Leu-44 is cleaved from the precursor. Met-58 is modified (methionine amide). A propeptide spanning residues Ser-62–Asn-119 is cleaved from the precursor.

It belongs to the bombesin/neuromedin-B/ranatensin family. Localized to the cutaneous granular glands in the skin and the brain.

The protein resides in the secreted. Functionally, stimulates smooth muscle contraction. Role in induction of hypothermia, stimulation of DNA replication and release of many gastrointestinal hormones. This Bombina orientalis (Oriental fire-bellied toad) protein is Bombesin.